A 384-amino-acid chain; its full sequence is ATP phosphoribosyltransferase regulatory subunit (384 aa).

This sequence belongs to the class-II aminoacyl-tRNA synthetase family. HisZ subfamily. In terms of assembly, heteromultimer composed of HisG and HisZ subunits.

It is found in the cytoplasm. It functions in the pathway amino-acid biosynthesis; L-histidine biosynthesis; L-histidine from 5-phospho-alpha-D-ribose 1-diphosphate: step 1/9. Functionally, required for the first step of histidine biosynthesis. May allow the feedback regulation of ATP phosphoribosyltransferase activity by histidine. This Rhodospirillum rubrum (strain ATCC 11170 / ATH 1.1.1 / DSM 467 / LMG 4362 / NCIMB 8255 / S1) protein is ATP phosphoribosyltransferase regulatory subunit.